We begin with the raw amino-acid sequence, 376 residues long: Erythronate-4-phosphate dehydrogenase (376 aa).

Substrate is bound by residues serine 45 and threonine 67. An NAD(+)-binding site is contributed by aspartate 147. Residue arginine 209 is part of the active site. An NAD(+)-binding site is contributed by aspartate 233. Glutamate 238 is a catalytic residue. The Proton donor role is filled by histidine 255. Glycine 258 contacts NAD(+). Tyrosine 259 is a binding site for substrate.

The protein belongs to the D-isomer specific 2-hydroxyacid dehydrogenase family. PdxB subfamily. In terms of assembly, homodimer.

It localises to the cytoplasm. The catalysed reaction is 4-phospho-D-erythronate + NAD(+) = (R)-3-hydroxy-2-oxo-4-phosphooxybutanoate + NADH + H(+). The protein operates within cofactor biosynthesis; pyridoxine 5'-phosphate biosynthesis; pyridoxine 5'-phosphate from D-erythrose 4-phosphate: step 2/5. In terms of biological role, catalyzes the oxidation of erythronate-4-phosphate to 3-hydroxy-2-oxo-4-phosphonooxybutanoate. The protein is Erythronate-4-phosphate dehydrogenase of Shewanella sp. (strain MR-7).